Consider the following 329-residue polypeptide: IDS-like terpene synthase 1 (329 aa).

Mg(2+) is bound by residues aspartate 79 and aspartate 83.

This sequence belongs to the FPP/GGPP synthase family. Requires Mg(2+) as cofactor.

The catalysed reaction is (2E)-geranyl diphosphate + H2O = linalool + diphosphate. It carries out the reaction (2E,6E)-farnesyl diphosphate + H2O = (6E)-nerolidol + diphosphate. Functionally, terpene synthase that shows monoterpene synthase activity and produces linalool, using geranyl diphosphate (GPP) as substrate. Also shows sesquiterpene synthase activity as it is able to convert farnesyl diphosphate (FPP) into (E)-nerolidol. The polypeptide is IDS-like terpene synthase 1 (Melampsora lini (Rust fungus)).